A 204-amino-acid polypeptide reads, in one-letter code: MQDLKTSLVEVFGKTNLVESFDELTLTVGSQNIIKTCLKLRDFFSFDTLIDLCGVDYLTYGQSDWNGNASASGFSRGRSHQGLKDIHEERFAVVYHLLSVSKNKRIRVKSFVDEVEPIIKSVTDIWASADWYEREAFDLMGILFENHTDLRRILTDYGFTGHPLRKDFPMIGEVEMRYDEDLCRVIYEKVSIEPNVNVPRVIRK.

This sequence belongs to the complex I 30 kDa subunit family. As to quaternary structure, NDH-1 is composed of 14 different subunits. Subunits NuoB, C, D, E, F, and G constitute the peripheral sector of the complex.

It is found in the cell inner membrane. It catalyses the reaction a quinone + NADH + 5 H(+)(in) = a quinol + NAD(+) + 4 H(+)(out). In terms of biological role, NDH-1 shuttles electrons from NADH, via FMN and iron-sulfur (Fe-S) centers, to quinones in the respiratory chain. The immediate electron acceptor for the enzyme in this species is believed to be ubiquinone. Couples the redox reaction to proton translocation (for every two electrons transferred, four hydrogen ions are translocated across the cytoplasmic membrane), and thus conserves the redox energy in a proton gradient. The polypeptide is NADH-quinone oxidoreductase subunit C (Vesicomyosocius okutanii subsp. Calyptogena okutanii (strain HA)).